We begin with the raw amino-acid sequence, 253 residues long: Probable transcriptional regulatory protein RBE_0568 (253 aa).

Positions 1–21 (MAGHSKFKNIQHRKGAQDKKR) are disordered.

This sequence belongs to the TACO1 family.

The protein localises to the cytoplasm. This chain is Probable transcriptional regulatory protein RBE_0568, found in Rickettsia bellii (strain RML369-C).